The chain runs to 394 residues: Myb-related protein 2 (394 aa).

Residues 42–102 (TDAKPRLKWT…HLQKYRLSKN (61 aa)) enclose the HTH myb-type domain. Positions 73-98 (PKTIMKVMGIPGLTLYHLKSHLQKYR) form a DNA-binding region, H-T-H motif. The segment at 148 to 168 (GEALQMQIEVQRRLHEQLEVQ) is coiled coil. The short motif at 161-166 (LHEQLE) is the LHEQLE element. Residues 338-363 (LHGHKSQHQQGNNEDHKLETRNRKGM) form a disordered region. Over residues 350–363 (NEDHKLETRNRKGM) the composition is skewed to basic and acidic residues.

Belongs to the MYB-CC family. As to quaternary structure, isoform 1: Homodimer. Isoform 3: Does not form homodimer. As to expression, expressed in phloem and/or cambium.

It is found in the nucleus. In terms of biological role, transcriptional activator that may activate the transcription of specific genes involved in nitrogen uptake or assimilation. Acts redundantly with MYR1 as a repressor of flowering and organ elongation under decreased light intensity. Represses gibberellic acid (GA)-dependent responses and affects levels of bioactive GA. In Arabidopsis thaliana (Mouse-ear cress), this protein is Myb-related protein 2.